A 285-amino-acid polypeptide reads, in one-letter code: Undecaprenyl-diphosphatase (285 aa).

The next 7 membrane-spanning stretches (helical) occupy residues 12 to 34 (IVIA…HAVI), 49 to 69 (IFLP…LVYF), 93 to 113 (IHIL…GGLL), 120 to 140 (LFGT…LLLL), 159 to 179 (LTYA…LPGI), 234 to 254 (VATI…AFLM), and 263 to 283 (WALS…FFIL).

The protein belongs to the UppP family.

It is found in the cell inner membrane. The enzyme catalyses di-trans,octa-cis-undecaprenyl diphosphate + H2O = di-trans,octa-cis-undecaprenyl phosphate + phosphate + H(+). In terms of biological role, catalyzes the dephosphorylation of undecaprenyl diphosphate (UPP). Confers resistance to bacitracin. In Gluconacetobacter diazotrophicus (strain ATCC 49037 / DSM 5601 / CCUG 37298 / CIP 103539 / LMG 7603 / PAl5), this protein is Undecaprenyl-diphosphatase.